Here is a 112-residue protein sequence, read N- to C-terminus: Transcriptional regulator ClgR (112 aa).

In terms of domain architecture, HTH cro/C1-type spans 13 to 67 (LRGARMSQGRTLREVSDSARVSLGYLSEIERGRKEPSSELLSAICTALQLPLSVV). Residues 24–43 (LREVSDSARVSLGYLSEIER) constitute a DNA-binding region (H-T-H motif).

Key stress-response regulator that plays an important role in multiple regulatory networks in response to different stress conditions. Required to manage host-derived stress during infection. Plays a role during hypoxia and reaeration. Controls the expression of many genes involved in heat shock, virulence, lipid metabolism, transport or regulation, including clpP1, clpP2, clpC1, hsp, groES, otsA, pknD, prcA and prcB. May function by protecting intracellular redox potential and by inducing the expression of trehalose, a constituent of cell walls that is important for defense against cell-surface and oxidative stress. Also performs different functions during stress response and is important for the pathogenicity of M.tuberculosis in vivo, regardless of the induction of the Clp proteolytic pathway. May directly activate SigE and/or SigH. This is Transcriptional regulator ClgR (clgR) from Mycobacterium tuberculosis (strain CDC 1551 / Oshkosh).